Consider the following 319-residue polypeptide: Ribonucleoside-diphosphate reductase small chain (319 aa).

Fe cation contacts are provided by D70, E101, and H104. Y108 is an active-site residue. Fe cation is bound by residues E163, E197, and H200. The segment at 313–319 (FSLDVDF) is interaction with R1.

The protein belongs to the ribonucleoside diphosphate reductase small chain family. In terms of assembly, interacts with RNR1/OPG080 subunit. Can interact with host RNR1 supunit. It depends on Fe cation as a cofactor.

It catalyses the reaction a 2'-deoxyribonucleoside 5'-diphosphate + [thioredoxin]-disulfide + H2O = a ribonucleoside 5'-diphosphate + [thioredoxin]-dithiol. Ribonucleoside-diphosphate reductase holoenzyme provides the precursors necessary for viral DNA synthesis. Allows virus growth in non-dividing cells. Catalyzes the biosynthesis of deoxyribonucleotides from the corresponding ribonucleotides. The sequence is that of Ribonucleoside-diphosphate reductase small chain (OPG048) from Vaccinia virus (strain Ankara) (VACV).